The sequence spans 950 residues: MDKTYQPHAIETSWYETWESNDYFAPSGEGQPYTIMIPPPNVTGSLHMGHGFNNAIMDALIRYRRMQGRNTLWQPGTDHAGIATQMVVERQLGAQGVSRHDLGREKFLEKVWEWKEQSGGNITRQIRRLGSSVDWSRERFTMDDGLSEAVKEAFVRLHEDGLIYRGKRLVNWDTKLHTAISDLEVENHDEKGHLWHLRYPLVNGAKTSEGLDYLVVATTRPETLLGDAAVAVHPEDERYAKLIGQFAELPIVGRHIPIIADEYVDREFGTGCVKITPAHDFNDYEVGKRHDLPLINIFDKNAAVLAQAQVFHLDGSVNPNLDPSLPQSYAGMDRFAARKAIVAEFEAMGLLEKVDDHALKVPKGDRSGTVIEPWLTDQWYVSTKPLAEDAIAAVEDGRIQFVPKQYENMYFSWMRDIQDWCISRQLWWGHRIPAWYDEAGNVYVGRDEVEVRTKHKLGNEAELRQDEDVLDTWFSSGLWTFSTLGWPQQTEFLKTFHPTDVLVTGFDIIFFWVARMIMLTMHLVKNPDGTPQIPFKTVYVHGLVRDGQGQKMSKSKGNVLDPLDIVDGIDLDTLLQKRTSGMMQPKLAEKIAKQTRAEFPEGIASYGTDALRFTFCSLASTGRDIKFDMGRVEGFRNFCNKIWNAANFVIENTDGQDTGVNGEPVELSSVDRWIISQLQRTEQEVTRQLDAFRFDLAAQALYEFIWDEYCAWYLELVKPVLWDENAPIERQRGTRRTLIRVLETALRLAHPFMPFITEEIWQRIKGQAGKEGPTLMLQPWPVADEGRIDAAAEGDIEWVKALMLGVRQIRGEMNISMAKRIDIILKNASPSDHRRLADNEPLLMKLAKLESIRVLEAGEEAPMSATALVGDMEVLVPMAGLIDKSAELGRLDKEIQRLEGEVKRVGGKLSNEGFVAKAPADVIEKERAKLAEAEQALAKLAEQRQKIAAL.

Residues 40-50 carry the 'HIGH' region motif; that stretch reads PNVTGSLHMGH. The 'KMSKS' region motif lies at 551–555; the sequence is KMSKS. Lys-554 provides a ligand contact to ATP. Residues 881 to 950 adopt a coiled-coil conformation; the sequence is LIDKSAELGR…AEQRQKIAAL (70 aa).

Belongs to the class-I aminoacyl-tRNA synthetase family. ValS type 1 subfamily. Monomer.

The protein localises to the cytoplasm. The catalysed reaction is tRNA(Val) + L-valine + ATP = L-valyl-tRNA(Val) + AMP + diphosphate. In terms of biological role, catalyzes the attachment of valine to tRNA(Val). As ValRS can inadvertently accommodate and process structurally similar amino acids such as threonine, to avoid such errors, it has a 'posttransfer' editing activity that hydrolyzes mischarged Thr-tRNA(Val) in a tRNA-dependent manner. This chain is Valine--tRNA ligase, found in Pseudomonas aeruginosa (strain ATCC 15692 / DSM 22644 / CIP 104116 / JCM 14847 / LMG 12228 / 1C / PRS 101 / PAO1).